The primary structure comprises 1121 residues: Putative ATP-dependent RNA helicase ECM32 (1121 aa).

The tract at residues 157 to 187 (NSTRKPRKKGGRRVGRGKKGRKGAKIKKEKK) is disordered. Basic residues predominate over residues 160-184 (RKPRKKGGRRVGRGKKGRKGAKIKK). Ser-227 is subject to Phosphoserine. A disordered region spans residues 233-452 (AKVSKSETSR…NQEKNNGKTK (220 aa)). Positions 251 to 263 (NKGKGNKANHKKN) are enriched in basic residues. Positions 278–287 (IRNNVRNSQP) are enriched in polar residues. Basic and acidic residues predominate over residues 307-316 (GKNESVDKHQ). Over residues 323 to 336 (LNGNGSGSTNTTGL) the composition is skewed to low complexity. Basic and acidic residues predominate over residues 342–363 (DHAGQKTKGNDKTGNKNPREAK). The segment covering 376 to 413 (KSNNQPNKGTSRWTIGSDTESSREPSISPNENTTSITK) has biased composition (polar residues). Residue Ser-392 is modified to Phosphoserine. Positions 426-452 (LNEKSKTTTMPKKLETKNQEKNNGKTK) are enriched in basic and acidic residues. Residue Thr-465 is modified to Phosphothreonine. 670 to 677 (GPPGTGKT) provides a ligand contact to ATP.

The protein belongs to the DNA2/NAM7 helicase family. Interacts with the peptidyl release factors SUP35 and weakly with SUP45.

It localises to the cytoplasm. The enzyme catalyses ATP + H2O = ADP + phosphate + H(+). Its function is as follows. Probable RNA helicase, which may be involved in modulation of the translation termination process. Probably unwinds double-stranded RNA. In vitro, unwinds covalently closed, circular DNA in the presence of a DNA topoisomerase TOP1 and replication factor-A protein RFA1. This is Putative ATP-dependent RNA helicase ECM32 (ECM32) from Saccharomyces cerevisiae (strain ATCC 204508 / S288c) (Baker's yeast).